A 181-amino-acid chain; its full sequence is Adenine phosphoribosyltransferase (181 aa).

This sequence belongs to the purine/pyrimidine phosphoribosyltransferase family. In terms of assembly, homodimer.

The protein localises to the cytoplasm. It carries out the reaction AMP + diphosphate = 5-phospho-alpha-D-ribose 1-diphosphate + adenine. The protein operates within purine metabolism; AMP biosynthesis via salvage pathway; AMP from adenine: step 1/1. Functionally, catalyzes a salvage reaction resulting in the formation of AMP, that is energically less costly than de novo synthesis. The polypeptide is Adenine phosphoribosyltransferase (Methylorubrum populi (strain ATCC BAA-705 / NCIMB 13946 / BJ001) (Methylobacterium populi)).